Here is a 296-residue protein sequence, read N- to C-terminus: Probable endonuclease 4 (296 aa).

Zn(2+) is bound by residues His-68, His-109, Glu-144, Asp-178, His-181, His-213, Asp-226, His-228, and Glu-258.

It belongs to the AP endonuclease 2 family. Requires Zn(2+) as cofactor.

It carries out the reaction Endonucleolytic cleavage to 5'-phosphooligonucleotide end-products.. Functionally, endonuclease IV plays a role in DNA repair. It cleaves phosphodiester bonds at apurinic or apyrimidinic (AP) sites, generating a 3'-hydroxyl group and a 5'-terminal sugar phosphate. The chain is Probable endonuclease 4 from Staphylococcus epidermidis (strain ATCC 35984 / DSM 28319 / BCRC 17069 / CCUG 31568 / BM 3577 / RP62A).